We begin with the raw amino-acid sequence, 301 residues long: GTPase Era (301 aa).

In terms of domain architecture, Era-type G spans 11 to 180 (RSGIITLVGR…KDVFFENCLN (170 aa)). The tract at residues 19–26 (GRPNVGKS) is G1. 19 to 26 (GRPNVGKS) provides a ligand contact to GTP. A G2 region spans residues 45–49 (QTTRR). The segment at 66 to 69 (DTPG) is G3. Residues 66–70 (DTPGI) and 129–132 (TKID) contribute to the GTP site. Residues 129-132 (TKID) form a G4 region. The tract at residues 159–161 (VSA) is G5. A KH type-2 domain is found at 210–286 (LEQEIPHSLL…YLRLIVKVVK (77 aa)).

It belongs to the TRAFAC class TrmE-Era-EngA-EngB-Septin-like GTPase superfamily. Era GTPase family. Monomer.

Its subcellular location is the cytoplasm. The protein localises to the cell membrane. Its function is as follows. An essential GTPase that binds both GDP and GTP, with rapid nucleotide exchange. Plays a role in 16S rRNA processing and 30S ribosomal subunit biogenesis and possibly also in cell cycle regulation and energy metabolism. In Tropheryma whipplei (strain TW08/27) (Whipple's bacillus), this protein is GTPase Era.